The chain runs to 474 residues: Synaptotagmin-17 (474 aa).

A disordered region spans residues 60-112 (WLMASRSSDKDGDSVHTASEVPLTPRTNSPDGRRSSSDTSKSTYSLTRRISSL). The span at 96-112 (SDTSKSTYSLTRRISSL) shows a compositional bias: low complexity. Residues Ser-118 and Ser-119 each carry the phosphoserine modification. C2 domains are found at residues 184-310 (QLGM…HWWK) and 321-455 (ELGE…EQWH).

Belongs to the synaptotagmin family. In terms of tissue distribution, expressed abundantly in brain (frontal and temporal lobes, hippocampus, hypothalamus, amygdala, substantia nigra, and pituitary), kidney, and prostate. Expressed in fetal brain, kidney and lung. Expressed in melanocytes.

It localises to the membrane. Functionally, plays a role in dendrite formation by melanocytes. In Homo sapiens (Human), this protein is Synaptotagmin-17 (SYT17).